The following is a 558-amino-acid chain: Dihydroxy-acid dehydratase (558 aa).

Residue cysteine 50 participates in [2Fe-2S] cluster binding. Residue aspartate 82 participates in Mg(2+) binding. Cysteine 123 provides a ligand contact to [2Fe-2S] cluster. Mg(2+)-binding residues include aspartate 124 and lysine 125. Position 125 is an N6-carboxylysine (lysine 125). [2Fe-2S] cluster is bound at residue cysteine 195. Residue glutamate 447 coordinates Mg(2+). Serine 472 functions as the Proton acceptor in the catalytic mechanism.

The protein belongs to the IlvD/Edd family. In terms of assembly, homodimer. Requires [2Fe-2S] cluster as cofactor. Mg(2+) is required as a cofactor.

The catalysed reaction is (2R)-2,3-dihydroxy-3-methylbutanoate = 3-methyl-2-oxobutanoate + H2O. It catalyses the reaction (2R,3R)-2,3-dihydroxy-3-methylpentanoate = (S)-3-methyl-2-oxopentanoate + H2O. The protein operates within amino-acid biosynthesis; L-isoleucine biosynthesis; L-isoleucine from 2-oxobutanoate: step 3/4. Its pathway is amino-acid biosynthesis; L-valine biosynthesis; L-valine from pyruvate: step 3/4. In terms of biological role, functions in the biosynthesis of branched-chain amino acids. Catalyzes the dehydration of (2R,3R)-2,3-dihydroxy-3-methylpentanoate (2,3-dihydroxy-3-methylvalerate) into 2-oxo-3-methylpentanoate (2-oxo-3-methylvalerate) and of (2R)-2,3-dihydroxy-3-methylbutanoate (2,3-dihydroxyisovalerate) into 2-oxo-3-methylbutanoate (2-oxoisovalerate), the penultimate precursor to L-isoleucine and L-valine, respectively. This chain is Dihydroxy-acid dehydratase, found in Saccharolobus islandicus (strain M.16.27) (Sulfolobus islandicus).